We begin with the raw amino-acid sequence, 255 residues long: Triosephosphate isomerase (255 aa).

Position 9–11 (N9–K11) interacts with substrate. The Electrophile role is filled by H95. The Proton acceptor role is filled by E167. Residues G173, S212, and G233–G234 contribute to the substrate site.

The protein belongs to the triosephosphate isomerase family. Homodimer.

It localises to the cytoplasm. It catalyses the reaction D-glyceraldehyde 3-phosphate = dihydroxyacetone phosphate. The protein operates within carbohydrate biosynthesis; gluconeogenesis. It participates in carbohydrate degradation; glycolysis; D-glyceraldehyde 3-phosphate from glycerone phosphate: step 1/1. Its function is as follows. Involved in the gluconeogenesis. Catalyzes stereospecifically the conversion of dihydroxyacetone phosphate (DHAP) to D-glyceraldehyde-3-phosphate (G3P). This is Triosephosphate isomerase from Enterobacter cloacae.